The primary structure comprises 417 residues: Monooxygenase cfoF (417 aa).

FAD is bound by residues 45–48, R126, and D327; that span reads DRDK. Residues 389–399 are compositionally biased toward basic and acidic residues; the sequence is AHTTQLDRDQF. The interval 389-417 is disordered; that stretch reads AHTTQLDRDQFTDGSGANDFLVGQQHSDK.

This sequence belongs to the aromatic-ring hydroxylase family. KMO subfamily. FAD is required as a cofactor.

It functions in the pathway secondary metabolite biosynthesis; flavonoid biosynthesis. Functionally, monooxygenase; part of the gene cluster that mediates the biosynthesis of chlorflavonin, a fungal flavonoid with acetolactate synthase inhibitory activity. Within the pathway, cfoF is responsible for the hydroxylation of the flavonoid skeleton at position C3. The pathway begins with the PKS-NRPS hybrid synthetase cfoA that uses benzoic acid or p-hydroxybenzoic acid as a starter unit with four rounds of chain elongation using malonyl-CoA to form the chalcone skeleton. Then, a new type of chalcone isomerase, cfoK, catalyzes the conversion of the chalcone into a flavanone by a histidine-mediated oxa-Michael addition mechanism. The desaturation of flavanone to flavone is catalyzed by a new type of flavone synthase, the flavin mononucleotide (FMN)-dependent oxidoreductase cfoJ. Monooxygenases cfoF, cfoG, and P450 cfoH are responsible for the hydroxylation of the flavonoid skeleton at sites C3, C8, and C2', respectively. Like cfoF, the dehydratase cfoI plays also a role in the hydroxylation of position C3. Methyltransferases cfoB, cfoC, and cfoD then catalyze the methylation of C7-OH, C8-OH, and C3-OH, respectively. Finally, the monooxygenase cfoE is responsible for the chlorination of flavonoid at position C3'. This Aspergillus candidus protein is Monooxygenase cfoF.